Consider the following 161-residue polypeptide: Non-specific lipid transfer protein GPI-anchored 24 (161 aa).

Residues 1-23 (MAQTTTLILLLATLLVAATTVSG) form the signal peptide. 4 disulfide bridges follow: cysteine 42-cysteine 79, cysteine 49-cysteine 63, cysteine 64-cysteine 104, and cysteine 77-cysteine 113. An N-linked (GlcNAc...) asparagine glycan is attached at asparagine 92. Residue aspartate 138 is the site of GPI-anchor amidated aspartate attachment. Positions 139-161 (AASKLAGTGLVGIVVITIAAMFY) are cleaved as a propeptide — removed in mature form.

This sequence belongs to the plant LTP family.

It is found in the cell membrane. In terms of biological role, probable lipid transfer protein. The sequence is that of Non-specific lipid transfer protein GPI-anchored 24 from Arabidopsis thaliana (Mouse-ear cress).